The sequence spans 205 residues: Large ribosomal subunit protein uL3 (205 aa).

The tract at residues 126–150 (GGPKTHGQSDRHRAPGSISSTTTPG) is disordered.

The protein belongs to the universal ribosomal protein uL3 family. Part of the 50S ribosomal subunit. Forms a cluster with proteins L14 and L19.

In terms of biological role, one of the primary rRNA binding proteins, it binds directly near the 3'-end of the 23S rRNA, where it nucleates assembly of the 50S subunit. This Dehalococcoides mccartyi (strain ATCC BAA-2266 / KCTC 15142 / 195) (Dehalococcoides ethenogenes (strain 195)) protein is Large ribosomal subunit protein uL3.